We begin with the raw amino-acid sequence, 239 residues long: Guanylate kinase (239 aa).

Positions 19-197 (GLLIVVTGAS…AVSELLAVQQ (179 aa)) constitute a Guanylate kinase-like domain. 26-33 (GASGVGKG) is a binding site for ATP.

It belongs to the guanylate kinase family.

Its subcellular location is the cytoplasm. The catalysed reaction is GMP + ATP = GDP + ADP. Its function is as follows. Essential for recycling GMP and indirectly, cGMP. This chain is Guanylate kinase (gmk), found in Deinococcus radiodurans (strain ATCC 13939 / DSM 20539 / JCM 16871 / CCUG 27074 / LMG 4051 / NBRC 15346 / NCIMB 9279 / VKM B-1422 / R1).